We begin with the raw amino-acid sequence, 261 residues long: tRNA pseudouridine synthase A (261 aa).

D55 (nucleophile) is an active-site residue. Position 114 (Y114) interacts with substrate.

It belongs to the tRNA pseudouridine synthase TruA family. As to quaternary structure, homodimer.

The catalysed reaction is uridine(38/39/40) in tRNA = pseudouridine(38/39/40) in tRNA. Formation of pseudouridine at positions 38, 39 and 40 in the anticodon stem and loop of transfer RNAs. The protein is tRNA pseudouridine synthase A of Paracoccus denitrificans (strain Pd 1222).